The primary structure comprises 384 residues: Flap endonuclease 1 (384 aa).

The tract at residues 1 to 105 (MGIKGLTKLL…GELAKRKDKR (105 aa)) is N-domain. Aspartate 34 contributes to the Mg(2+) binding site. Arginine 71 serves as a coordination point for DNA. Aspartate 87, glutamate 159, glutamate 161, aspartate 180, and aspartate 182 together coordinate Mg(2+). The segment at 123–254 (EIEKLSKRTV…VNALKYIKQY (132 aa)) is I-domain. Glutamate 159 provides a ligand contact to DNA. Residues glycine 232 and aspartate 234 each coordinate DNA. Aspartate 234 is a binding site for Mg(2+). The interval 337-345 (GQNRLETFF) is interaction with PCNA. Residues 353-384 (STVGKRKEPEKGKGKFGAAGGKKSKGVTKRKF) form a disordered region. Residues 374 to 384 (KKSKGVTKRKF) show a composition bias toward basic residues.

This sequence belongs to the XPG/RAD2 endonuclease family. FEN1 subfamily. As to quaternary structure, interacts with PCNA. Three molecules of FEN1 bind to one PCNA trimer with each molecule binding to one PCNA monomer. PCNA stimulates the nuclease activity without altering cleavage specificity. Mg(2+) is required as a cofactor. Post-translationally, phosphorylated. Phosphorylation upon DNA damage induces relocalization to the nuclear plasma.

It is found in the nucleus. The protein resides in the nucleolus. It localises to the nucleoplasm. The protein localises to the mitochondrion. Structure-specific nuclease with 5'-flap endonuclease and 5'-3' exonuclease activities involved in DNA replication and repair. During DNA replication, cleaves the 5'-overhanging flap structure that is generated by displacement synthesis when DNA polymerase encounters the 5'-end of a downstream Okazaki fragment. It enters the flap from the 5'-end and then tracks to cleave the flap base, leaving a nick for ligation. Also involved in the long patch base excision repair (LP-BER) pathway, by cleaving within the apurinic/apyrimidinic (AP) site-terminated flap. Acts as a genome stabilization factor that prevents flaps from equilibrating into structures that lead to duplications and deletions. Also possesses 5'-3' exonuclease activity on nicked or gapped double-stranded DNA, and exhibits RNase H activity. Also involved in replication and repair of rDNA and in repairing mitochondrial DNA. The sequence is that of Flap endonuclease 1 from Micromonas commoda (strain RCC299 / NOUM17 / CCMP2709) (Picoplanktonic green alga).